Consider the following 331-residue polypeptide: tRNA (guanine-N(1)-)-methyltransferase (331 aa).

Composition is skewed to low complexity over residues 77-99 (GSDTTARSGSTAATSASAQQATR) and 107-134 (AQPGDAGQGTAAPDYARTGGTPGAGRAA). The segment at 77–137 (GSDTTARSGS…PGAGRAASSR (61 aa)) is disordered. S-adenosyl-L-methionine-binding positions include Gly169 and 193-198 (LGDYVL). The disordered stretch occupies residues 312-331 (WQRCSPAPSEQAPEGARDMA).

It belongs to the RNA methyltransferase TrmD family. In terms of assembly, homodimer.

It is found in the cytoplasm. The enzyme catalyses guanosine(37) in tRNA + S-adenosyl-L-methionine = N(1)-methylguanosine(37) in tRNA + S-adenosyl-L-homocysteine + H(+). Its function is as follows. Specifically methylates guanosine-37 in various tRNAs. The chain is tRNA (guanine-N(1)-)-methyltransferase from Kocuria rhizophila (strain ATCC 9341 / DSM 348 / NBRC 103217 / DC2201).